The primary structure comprises 324 residues: Olfactory receptor 5A2 (324 aa).

The Extracellular portion of the chain corresponds to 1–26 (MAVGRNNTIVTKFILLGLSDHPQMKI). A glycan (N-linked (GlcNAc...) asparagine) is linked at Asn6. A helical transmembrane segment spans residues 27–47 (FLFMLFLGLYLLTLAWNLSLI). Residues 48–55 (ALIKMDSH) lie on the Cytoplasmic side of the membrane. The helical transmembrane segment at 56 to 76 (LHMPMYFFLSNLSFLDICYVS) threads the bilayer. At 77–100 (STAPKMLSDIITEQKTISFVGCAT) the chain is on the extracellular side. Cys98 and Cys190 form a disulfide bridge. The chain crosses the membrane as a helical span at residues 101–121 (QYFVFCGMGLTECFLLAAMAY). Over 122–134 (DRYAAICNPLLYT) the chain is Cytoplasmic. The helical transmembrane segment at 135 to 155 (VLISHTLCLKMVVGAYVGGFL) threads the bilayer. Over 156 to 197 (SSFIETYSVYQHDFCGPYMINHFFCDLPPVLALSCSDTFTSE) the chain is Extracellular. Residues 198-218 (VVTFIVSVVVGIVSVLVVLIS) traverse the membrane as a helical segment. Topologically, residues 219–238 (YGYIVAAVVKISSATGRTKA) are cytoplasmic. The chain crosses the membrane as a helical span at residues 239-259 (FSTCASHLTAVTLFYGSGFFM). At 260–272 (YMRPSSSYSLNRD) the chain is on the extracellular side. The chain crosses the membrane as a helical span at residues 273-293 (KVVSIFYALVIPVVNPIIYSF). Residues 294–324 (RNKEIKNAMRKAMERDPGISHGGPFIFMTLG) lie on the Cytoplasmic side of the membrane.

The protein belongs to the G-protein coupled receptor 1 family.

Its subcellular location is the cell membrane. Its function is as follows. Odorant receptor. The protein is Olfactory receptor 5A2 (OR5A2) of Homo sapiens (Human).